A 201-amino-acid chain; its full sequence is Large ribosomal subunit protein uL4 (201 aa).

The tract at residues 42-67 is disordered; the sequence is GNSAQKTRSEVSGGGKKPWNQKGTGR.

Belongs to the universal ribosomal protein uL4 family. In terms of assembly, part of the 50S ribosomal subunit.

Its function is as follows. One of the primary rRNA binding proteins, this protein initially binds near the 5'-end of the 23S rRNA. It is important during the early stages of 50S assembly. It makes multiple contacts with different domains of the 23S rRNA in the assembled 50S subunit and ribosome. Forms part of the polypeptide exit tunnel. In Legionella pneumophila (strain Corby), this protein is Large ribosomal subunit protein uL4.